The following is a 460-amino-acid chain: Photosystem II CP43 reaction center protein (460 aa).

At 1–35 the chain is on the cytoplasmic side; the sequence is MVTLSNTSMVGGRDLPSTGFAWWSGNARLINLSGK. A helical membrane pass occupies residues 36–58; sequence LLGAHVAHAGLIVFWAGAMTLFE. The Lumenal, thylakoid segment spans residues 59–98; sequence VAHFIPEKPMYEQGLILLPHIATLGWGVGPAGEVTDIFPF. The helical transmembrane segment at 99–121 threads the bilayer; the sequence is FVVGVLHLISSAVLGLGGIYHAL. Over 122 to 142 the chain is Cytoplasmic; the sequence is RGPEVLEEYSSFFGYDWKDKN. Residues 143 to 165 traverse the membrane as a helical segment; sequence QMTNIIGYHLILLGCGALLLVFK. At 166–220 the chain is on the lumenal, thylakoid side; that stretch reads AMFFGGVYDTWAPGGGDVRVITNPTLNPAIIFGYLLKAPFGGEGWIISVNNMEDI. Residues 221 to 240 form a helical membrane-spanning segment; it reads IGGHIWIGLICISGGIWHIL. At 241 to 255 the chain is on the cytoplasmic side; sequence TKPFGWARRALIWSG. Residues 256 to 276 traverse the membrane as a helical segment; that stretch reads EAYLSYSLGALSLMGFIASVF. Residues 277–411 are Lumenal, thylakoid-facing; sequence VWFNNTAYPS…NSFNYVSPRA (135 aa). 2 residues coordinate [CaMn4O5] cluster: Glu341 and Arg344. The chain crosses the membrane as a helical span at residues 412 to 436; sequence WLATSHFVLGFFFLVGHLWHAGRAR. Topologically, residues 437–460 are cytoplasmic; that stretch reads AAAAGFEKGIDRETEPTLFMPDLD.

Belongs to the PsbB/PsbC family. PsbC subfamily. In terms of assembly, PSII is composed of 1 copy each of membrane proteins PsbA, PsbB, PsbC, PsbD, PsbE, PsbF, PsbH, PsbI, PsbJ, PsbK, PsbL, PsbM, PsbT, PsbX, PsbY, PsbZ, Psb30/Ycf12, peripheral proteins PsbO, CyanoQ (PsbQ), PsbU, PsbV and a large number of cofactors. It forms dimeric complexes. Binds multiple chlorophylls and provides some of the ligands for the Ca-4Mn-5O cluster of the oxygen-evolving complex. It may also provide a ligand for a Cl- that is required for oxygen evolution. PSII binds additional chlorophylls, carotenoids and specific lipids. serves as cofactor.

The protein resides in the cellular thylakoid membrane. Its function is as follows. One of the components of the core complex of photosystem II (PSII). PSII binds chlorophyll and helps catalyze the primary light-induced photochemical processes of PSII. PSII is a light-driven water:plastoquinone oxidoreductase, using light energy to abstract electrons from H(2)O, generating O(2) and a proton gradient subsequently used for ATP formation. Required for correct assembly of PSII. The chain is Photosystem II CP43 reaction center protein from Synechocystis sp. (strain ATCC 27184 / PCC 6803 / Kazusa).